Reading from the N-terminus, the 303-residue chain is Biphenyl-2,3-diol 1,2-dioxygenase (303 aa).

2 consecutive VOC domains span residues 5–119 (SLGY…IYYG) and 143–264 (GLGH…YGWS). Fe cation contacts are provided by H146, H210, and E260. The segment at 283 to 303 (WGHKSVRDKALRATKHEQQPE) is disordered. Basic and acidic residues predominate over residues 287–303 (SVRDKALRATKHEQQPE).

This sequence belongs to the extradiol ring-cleavage dioxygenase family. Homooctamer. It depends on Fe(2+) as a cofactor.

The catalysed reaction is biphenyl-2,3-diol + O2 = 2-hydroxy-6-oxo-6-phenylhexa-2,4-dienoate + H(+). Its pathway is xenobiotic degradation; biphenyl degradation; 2-hydroxy-2,4-pentadienoate and benzoate from biphenyl: step 3/4. The protein is Biphenyl-2,3-diol 1,2-dioxygenase (bphC) of Metapseudomonas furukawaii (Pseudomonas furukawaii).